The chain runs to 141 residues: Hemoglobin subunit alpha-2 (141 aa).

A Globin domain is found at 1 to 141 (VLSEGNKKII…VTYQLSSLYR (141 aa)). Histidine 59 is an O2 binding site. Histidine 88 contacts heme b.

The protein belongs to the globin family. In terms of assembly, heterotetramer of two alpha chains and two beta chains. As to expression, red blood cells.

Its function is as follows. Involved in oxygen transport from the lung to the various peripheral tissues. The sequence is that of Hemoglobin subunit alpha-2 from Torpedo marmorata (Marbled electric ray).